Here is a 123-residue protein sequence, read N- to C-terminus: Large ribosomal subunit protein uL24 (123 aa).

The protein belongs to the universal ribosomal protein uL24 family. Part of the 50S ribosomal subunit.

In terms of biological role, one of two assembly initiator proteins, it binds directly to the 5'-end of the 23S rRNA, where it nucleates assembly of the 50S subunit. Its function is as follows. Located at the polypeptide exit tunnel on the outside of the subunit. The chain is Large ribosomal subunit protein uL24 from Pyrobaculum aerophilum (strain ATCC 51768 / DSM 7523 / JCM 9630 / CIP 104966 / NBRC 100827 / IM2).